Consider the following 85-residue polypeptide: Putative membrane protein insertion efficiency factor (85 aa).

It belongs to the UPF0161 family.

It localises to the cell inner membrane. Its function is as follows. Could be involved in insertion of integral membrane proteins into the membrane. The protein is Putative membrane protein insertion efficiency factor of Vibrio atlanticus (strain LGP32) (Vibrio splendidus (strain Mel32)).